The following is a 218-amino-acid chain: Thiopurine S-methyltransferase (218 aa).

Trp10, Leu45, Glu66, and Arg123 together coordinate S-adenosyl-L-methionine.

This sequence belongs to the class I-like SAM-binding methyltransferase superfamily. TPMT family.

It is found in the cytoplasm. The catalysed reaction is S-adenosyl-L-methionine + a thiopurine = S-adenosyl-L-homocysteine + a thiopurine S-methylether.. In Shewanella baltica (strain OS185), this protein is Thiopurine S-methyltransferase.